A 465-amino-acid polypeptide reads, in one-letter code: Phosphatidate cytidylyltransferase (465 aa).

The segment at 1–60 (MSDQPPAENADVRQRRAPESPVTERLRAPARDDARPTSDESDMEGILQDEDSDAGSKNKE) is disordered. A compositionally biased stretch (basic and acidic residues) spans 10–38 (ADVRQRRAPESPVTERLRAPARDDARPTS). Positions 39-53 (DESDMEGILQDEDSD) are enriched in acidic residues. The next 8 helical transmembrane spans lie at 95 to 117 (WVVR…TRGA), 121 to 143 (MFLV…LAVY), 158 to 178 (FLLT…WGIV), 187 to 207 (FLVA…FVSF), 214 to 234 (GYYM…LLIV), 239 to 259 (FIIQ…AMII), 288 to 308 (GFIG…LALY), and 367 to 387 (IALS…ASGF).

Belongs to the CDS family.

The protein localises to the membrane. The catalysed reaction is a 1,2-diacyl-sn-glycero-3-phosphate + CTP + H(+) = a CDP-1,2-diacyl-sn-glycerol + diphosphate. It participates in phospholipid metabolism; CDP-diacylglycerol biosynthesis; CDP-diacylglycerol from sn-glycerol 3-phosphate: step 3/3. In terms of biological role, provides CDP-diacylglycerol, an important precursor for the synthesis of phosphatidylinositol (PtdIns). This is Phosphatidate cytidylyltransferase (cdgs-1) from Caenorhabditis elegans.